Consider the following 232-residue polypeptide: Large ribosomal subunit protein uL1 (232 aa).

The protein belongs to the universal ribosomal protein uL1 family. As to quaternary structure, part of the 50S ribosomal subunit.

Functionally, binds directly to 23S rRNA. The L1 stalk is quite mobile in the ribosome, and is involved in E site tRNA release. Its function is as follows. Protein L1 is also a translational repressor protein, it controls the translation of the L11 operon by binding to its mRNA. This Chlamydia caviae (strain ATCC VR-813 / DSM 19441 / 03DC25 / GPIC) (Chlamydophila caviae) protein is Large ribosomal subunit protein uL1.